Reading from the N-terminus, the 170-residue chain is Bifunctional protein PyrR (170 aa).

The PRPP-binding signature appears at leucine 90 to threonine 102.

It belongs to the purine/pyrimidine phosphoribosyltransferase family. PyrR subfamily.

The enzyme catalyses UMP + diphosphate = 5-phospho-alpha-D-ribose 1-diphosphate + uracil. Regulates the transcription of the pyrimidine nucleotide (pyr) operon in response to exogenous pyrimidines. Its function is as follows. Also displays a weak uracil phosphoribosyltransferase activity which is not physiologically significant. The chain is Bifunctional protein PyrR from Pseudomonas syringae pv. tomato (strain ATCC BAA-871 / DC3000).